Here is a 736-residue protein sequence, read N- to C-terminus: Catalase-peroxidase (736 aa).

An N-terminal signal peptide occupies residues 1-21 (MFKKTILSFVISAVMVTAASA). The segment at residues 102–224 (WHAAGTYRTH…LAAVEMGLIY (123 aa)) is a cross-link (tryptophyl-tyrosyl-methioninium (Trp-Tyr) (with M-250)). The active-site Proton acceptor is the His-103. The segment at residues 224-250 (YVNPVGPHGNPDPLLAANDIRMSFGRM) is a cross-link (tryptophyl-tyrosyl-methioninium (Tyr-Met) (with W-102)). His-265 provides a ligand contact to heme b.

This sequence belongs to the peroxidase family. Peroxidase/catalase subfamily. In terms of assembly, homodimer or homotetramer. Requires heme b as cofactor. Formation of the three residue Trp-Tyr-Met cross-link is important for the catalase, but not the peroxidase activity of the enzyme.

It catalyses the reaction H2O2 + AH2 = A + 2 H2O. It carries out the reaction 2 H2O2 = O2 + 2 H2O. Bifunctional enzyme with both catalase and broad-spectrum peroxidase activity. This Shewanella woodyi (strain ATCC 51908 / MS32) protein is Catalase-peroxidase.